A 113-amino-acid chain; its full sequence is Large ribosomal subunit protein bL19m (113 aa).

It belongs to the bacterial ribosomal protein bL19 family.

It localises to the mitochondrion. This chain is Large ribosomal subunit protein bL19m (RPL19), found in Reclinomonas americana.